Consider the following 2622-residue polypeptide: Ankyrin-3 (2622 aa).

The interval 1–44 is disordered; that stretch reads MAHAASQLKKNRDLEINAEEETEKKKKHRKRSRDRKKKSDANAS. Over residues 25–38 the composition is skewed to basic residues; it reads KKKHRKRSRDRKKK. Serine 39 carries the phosphoserine modification. ANK repeat units follow at residues 73–102, 106–135, 139–168, 172–201, 203–230, 242–271, 275–304, 308–337, 341–370, 374–403, 407–436, 440–469, 473–502, 506–535, 539–568, 572–601, 605–634, 638–667, 671–700, 704–733, 737–766, 770–799, and 803–832; these read NGLNALHLASKEGHVEVVSELLQREANVDA, KGNTALHIASLAGQAEVVKVLVTNGANVNA, NGFTPLYMAAQENHLEVVRFLLDNGASQSL, DGFTPLAVALQQGHDQVVSLLLENDTKGKV, LPALHIAARKDDTKAAALLLQNDTNADI, SGFTPLHIAAHYGNINVATLLLNRAAAVDF, NDITPLHVASKRGNANMVKLLLDRGAKIDA, DGLTPLHCGARSGHEQVVEMLLDRAAPILS, NGLSPLHMATQGDHLNCVQLLLQHNVPVDD, DYLTALHVAAHCGHYKVAKVLLDKKANPNA, NGFTPLHIACKKNRIRVMELLLKHGASIQA, SGLTPIHVAAFMGHVNIVSQLMHHGASPNT, RGETALHMAARSGQAEVVRYLVQDGAQVEA, DDQTPLHISARLGKADIVQQLLQQGASPNA, SGYTPLHLSAREGHEDVAAFLLDHGASLSI, KGFTPLHVAAKYGKLEVASLLLQKSASPDA, SGLTPLHVAAHYDNQKVALLLLDQGASPHA, NGYTPLHIAAKKNQMDIATSLLEYGADANA, QGIASVHLAAQEGHVDMVSLLLSRNANVNL, SGLTPLHLAAQEDRVNVAEVLVNQGAHVDA, MGYTPLHVGCHYGNIKIVNFLLQHSAKVNA, NGYTPLHQAAQQGHTHIINVLLQNNASPNE, and NGNTALAIARRLGYISVVDTLKVVTEEIMT. Serine 631 carries the phosphoserine modification. A phosphoserine mark is found at valine 851, serine 855, serine 869, serine 875, serine 921, serine 924, serine 930, serine 965, serine 967, and serine 1121. The interval 868–889 is disordered; that stretch reads LSDGEYISDGEEGEDAITGDTD. Acidic residues predominate over residues 873–884; the sequence is YISDGEEGEDAI. ZU5 domains follow at residues 992–1147 and 1149–1296; these read FLVS…VVSR and KQES…LADC. A phosphoserine mark is found at serine 1458 and serine 1469. The tract at residues 1510-1539 is disordered; it reads TPITVPGPAKSGSLSSSPSNTPSASPLKSI. Positions 1515 to 1536 are enriched in low complexity; that stretch reads PGPAKSGSLSSSPSNTPSASPL. 7 positions are modified to phosphoserine: serine 1621, serine 1624, serine 1679, serine 1984, serine 2102, serine 2114, and serine 2117. Disordered stretches follow at residues 1968-1992, 2099-2147, and 2292-2312; these read VESKGPPKSPKSDKGHSPEDDWTEF, ILES…FHEV, and SPDVAKSAAETSAQHAEKDNQ. The span at 1977-1986 shows a compositional bias: basic and acidic residues; the sequence is PKSDKGHSPE. The span at 2106-2127 shows a compositional bias: basic and acidic residues; that stretch reads FSQHDQDKSPLSDSGFETRSEK. Residues 2128–2137 are compositionally biased toward polar residues; sequence TPSAPQSAES. Residues 2336–2420 form the Death domain; that stretch reads TDIRMAIVAD…DIVTLLEGPI (85 aa). 3 positions are modified to phosphoserine: serine 2457, serine 2475, and serine 2544. The interval 2568 to 2622 is disordered; that stretch reads CVPVGMKKMTRTPADGKARLNLQEEEGSARSEPKQGEGYKVKTKKEIRNVEKKAH. Positions 2594 to 2622 are enriched in basic and acidic residues; it reads GSARSEPKQGEGYKVKTKKEIRNVEKKAH.

As to quaternary structure, may be a constituent of a NFASC/NRCAM/ankyrin G complex. Interacts with RHBG. Directly interacts with DMD and betaDAG1; this interaction does not interfere with DMD-binding and is required for DMD and betaDAG1 retention at costameres. Interacts (via N-terminal ANK repeats) with SCHIP1 isoform 7 (via C-terminus); this interaction is required for the localization at axon initial segments (AISs) and nodes of Ranvier (NRs). Interacts with PLEC and FLNC. Interacts (via ANK repeats) with IQCJ-SCHIP1; required for IQCJ-SCHIP1 localization at axon initial segments (AIS) and nodes of Ranvier. Interacts with SCHIP1. Interacts with KCNA1; this inhibits channel activity. Interacts with SCN5A. Interacts with PKP2 and GJA1/CX43. In terms of assembly, interacts (via its C-terminal muscle-specific Obscurin/Titin-Binding-related domain sequence) with PLEC and FLNC. In terms of tissue distribution, expressed in the heart (at protein level). Expressed in skeletal muscle (at protein level). Expressed at highest levels in brain and testis, followed by skin, kidney, liver and spleen. May be specifically expressed in muscle tissues, including heart and skeletal muscle (extensor digitorum longus) (at protein level). As to expression, expressed in skeletal muscle, brain, lung, heart, testes and kidney.

The protein localises to the cytoplasm. Its subcellular location is the cytoskeleton. It is found in the cell projection. It localises to the axon. The protein resides in the cell membrane. The protein localises to the sarcolemma. Its subcellular location is the postsynaptic cell membrane. It is found in the lysosome. It localises to the T-tubule. Membrane-cytoskeleton linker. May participate in the maintenance/targeting of ion channels and cell adhesion molecules at the nodes of Ranvier and axonal initial segments. In skeletal muscle, required for costamere localization of DMD and betaDAG1. Regulates KCNA1 channel activity in function of dietary Mg(2+) levels, and thereby contributes to the regulation of renal Mg(2+) reabsorption. Required for intracellular adhesion and junctional conductance in myocytes, potentially via stabilization of GJA1/CX43 protein abundance and promotion of PKP2, GJA1/CX43, and SCN5A/Nav1.5 localization to cell-cell junctions. The sequence is that of Ankyrin-3 (Ank3) from Rattus norvegicus (Rat).